The following is a 439-amino-acid chain: Maintenance of mitochondrial morphology protein 1 (439 aa).

The Lumenal portion of the chain corresponds to 1-76; it reads MSQDLIETTA…NGNTWSFTQG (76 aa). The helical transmembrane segment at 77 to 97 threads the bilayer; that stretch reads LVIGQVSVIFIIIVFVKFFVF. Residues 98–439 lie on the Cytoplasmic side of the membrane; that stretch reads ADSSSHIPTK…TPGEYVNSNI (342 aa). Disordered stretches follow at residues 125-145, 309-336, and 405-425; these read KHSN…SLDS, MNGY…DGGT, and REPV…GTSA. Residues 165–395 form the SMP-LTD domain; it reads ASESLDWFNV…EPRFQVVRLP (231 aa). Composition is skewed to low complexity over residues 315-326 and 410-424; these read ENANGDGASSSN and KKTT…NGTS.

It belongs to the MMM1 family. As to quaternary structure, homodimer. Component of the ER-mitochondria encounter structure (ERMES) or MDM complex, composed of MMM1, MDM10, MDM12 and MDM34. An MMM1 homodimer associates with one molecule of MDM12 on each side in a pairwise head-to-tail manner, and the SMP-LTD domains of MMM1 and MDM12 generate a continuous hydrophobic tunnel for phospholipid trafficking.

The protein resides in the endoplasmic reticulum membrane. Functionally, component of the ERMES/MDM complex, which serves as a molecular tether to connect the endoplasmic reticulum (ER) and mitochondria. Components of this complex are involved in the control of mitochondrial shape and protein biogenesis, and function in nonvesicular lipid trafficking between the ER and mitochondria. The MDM12-MMM1 subcomplex functions in the major beta-barrel assembly pathway that is responsible for biogenesis of all outer membrane beta-barrel proteins, and acts in a late step after the SAM complex. The MDM10-MDM12-MMM1 subcomplex further acts in the TOM40-specific pathway after the action of the MDM12-MMM1 complex. Essential for establishing and maintaining the structure of mitochondria and maintenance of mtDNA nucleoids. The protein is Maintenance of mitochondrial morphology protein 1 of Candida albicans (strain WO-1) (Yeast).